The chain runs to 264 residues: Thymidylate synthase (264 aa).

R21 is a dUMP binding site. A (6R)-5,10-methylene-5,6,7,8-tetrahydrofolate-binding site is contributed by H51. 126 to 127 (RR) contacts dUMP. C146 serves as the catalytic Nucleophile. DUMP is bound by residues 166 to 169 (RSAD), N177, and 207 to 209 (HLY). D169 contributes to the (6R)-5,10-methylene-5,6,7,8-tetrahydrofolate binding site. (6R)-5,10-methylene-5,6,7,8-tetrahydrofolate is bound at residue S263.

It belongs to the thymidylate synthase family. Bacterial-type ThyA subfamily. Homodimer.

Its subcellular location is the cytoplasm. It carries out the reaction dUMP + (6R)-5,10-methylene-5,6,7,8-tetrahydrofolate = 7,8-dihydrofolate + dTMP. Its pathway is pyrimidine metabolism; dTTP biosynthesis. In terms of biological role, catalyzes the reductive methylation of 2'-deoxyuridine-5'-monophosphate (dUMP) to 2'-deoxythymidine-5'-monophosphate (dTMP) while utilizing 5,10-methylenetetrahydrofolate (mTHF) as the methyl donor and reductant in the reaction, yielding dihydrofolate (DHF) as a by-product. This enzymatic reaction provides an intracellular de novo source of dTMP, an essential precursor for DNA biosynthesis. This Neisseria gonorrhoeae (strain ATCC 700825 / FA 1090) protein is Thymidylate synthase.